Reading from the N-terminus, the 165-residue chain is Ribosome maturation factor RimM (165 aa).

The region spanning 90–161 (PDTYYVSDLK…KIIIKPVGEW (72 aa)) is the PRC barrel domain.

This sequence belongs to the RimM family. Binds ribosomal protein uS19.

The protein localises to the cytoplasm. Functionally, an accessory protein needed during the final step in the assembly of 30S ribosomal subunit, possibly for assembly of the head region. Essential for efficient processing of 16S rRNA. May be needed both before and after RbfA during the maturation of 16S rRNA. It has affinity for free ribosomal 30S subunits but not for 70S ribosomes. The protein is Ribosome maturation factor RimM of Clostridium beijerinckii (strain ATCC 51743 / NCIMB 8052) (Clostridium acetobutylicum).